The primary structure comprises 648 residues: DNA ligase (648 aa).

Residues 63–67 (DILYD) and 105–106 (ST) contribute to the NAD(+) site. K143 (N6-AMP-lysine intermediate) is an active-site residue. NAD(+) contacts are provided by R159, E190, and K302. 4 residues coordinate Zn(2+): C390, C393, C406, and C412. The 79-residue stretch at 570-648 (SLASPLTGKI…SEQEYLDLIS (79 aa)) folds into the BRCT domain.

Belongs to the NAD-dependent DNA ligase family. LigA subfamily. Mg(2+) is required as a cofactor. Mn(2+) serves as cofactor.

The catalysed reaction is NAD(+) + (deoxyribonucleotide)n-3'-hydroxyl + 5'-phospho-(deoxyribonucleotide)m = (deoxyribonucleotide)n+m + AMP + beta-nicotinamide D-nucleotide.. DNA ligase that catalyzes the formation of phosphodiester linkages between 5'-phosphoryl and 3'-hydroxyl groups in double-stranded DNA using NAD as a coenzyme and as the energy source for the reaction. It is essential for DNA replication and repair of damaged DNA. The polypeptide is DNA ligase (Shewanella baltica (strain OS155 / ATCC BAA-1091)).